Consider the following 173-residue polypeptide: Monothiol glutaredoxin-S14, chloroplastic (173 aa).

Residues methionine 1–serine 63 constitute a chloroplast transit peptide. Residues lysine 72–serine 173 enclose the Glutaredoxin domain. Lysine 89 provides a ligand contact to glutathione. Residues cysteine 97 and phenylalanine 99 each contribute to the [2Fe-2S] cluster site. The residue at position 97 (cysteine 97) is an S-glutathionyl cysteine. The tract at residues cysteine 97 to serine 100 is required for CAX1 activation. Glutathione is bound by residues arginine 126 and lysine 130. The segment at serine 133–threonine 137 is required for CAX1 activation. Residues phenylalanine 138 and cysteine 151 to aspartate 152 contribute to the glutathione site.

It belongs to the glutaredoxin family. CGFS subfamily. [2Fe-2S]-bridged holo-homodimer. Interacts with N-terminal part of CAX1 in yeast. Interacts in vitro with SUFE1, BOLA1, BOLA2 and BOLA4. Interacts in vivo only with SUFE1, BOLA1 and BOLA4. Interacts with SBP1. Highly expressed in leaves, at intermediate levels in stems and at lower levels in roots and flowers.

It is found in the plastid. The protein localises to the chloroplast. In terms of biological role, may only reduce GSH-thiol disulfides, but not protein disulfides (Potential). Probably involved in the regulation of the redox state of the BOLA proteins (Potential). May act as Fe-S cluster donors to Fe-S cluster-requiring proteins. May protect cells against protein oxidative damage. May regulate CAX cation transporters. The GRXS14-BOLA1 heterodimer binds a labile, oxygen sensitive Fe-S cluster. The polypeptide is Monothiol glutaredoxin-S14, chloroplastic (Arabidopsis thaliana (Mouse-ear cress)).